Consider the following 334-residue polypeptide: MRGPSWSRPRPLLLLLLLLSPWPVWAQVSATASPSGSLGAPDCPEVCTCVPGGLASCSALSLPAVPPGLSLRLRALLLDHNRVRALPPGAFAGAGALQRLDLRENGLHSVHVRAFWGLGALQLLDLSANQLEALAPGTFAPLRALRNLSLAGNRLARLEPAALGALPLLRSLSLQDNELAALAPGLLGRLPALDALHLRGNPWGCGCALRPLCAWLRRHPLPASEAETVLCVWPGRLTLSPLTAFSDAAFSHCAQPLALRDLAVVYTLGPASFLVSLASCLALGSGLTACRARRRRLRTAALRPPRPPDPNPDPDPHGCASPADPGSPAAAAQA.

Residues 1-26 (MRGPSWSRPRPLLLLLLLLSPWPVWA) form the signal peptide. Residues 27 to 261 (QVSATASPSG…HCAQPLALRD (235 aa)) lie on the Extracellular side of the membrane. In terms of domain architecture, LRRNT spans 34–71 (PSGSLGAPDCPEVCTCVPGGLASCSALSLPAVPPGLSL). Cystine bridges form between C43/C49 and C47/C57. 5 LRR repeats span residues 72–93 (RLRA…AFAG), 96–117 (ALQR…AFWG), 120–141 (ALQL…TFAP), 144–167 (ALRN…GALP), and 168–190 (LLRS…LGRL). N147 carries an N-linked (GlcNAc...) asparagine glycan. An LRRCT domain is found at 201-255 (NPWGCGCALRPLCAWLRRHPLPASEAETVLCVWPGRLTLSPLTAFSDAAFSHCAQ). Disulfide bonds link C205-C231 and C207-C253. Residues 262-282 (LAVVYTLGPASFLVSLASCLA) traverse the membrane as a helical segment. At 283–334 (LGSGLTACRARRRRLRTAALRPPRPPDPNPDPDPHGCASPADPGSPAAAAQA) the chain is on the cytoplasmic side. A disordered region spans residues 298-334 (RTAALRPPRPPDPNPDPDPHGCASPADPGSPAAAAQA). Residues 304 to 313 (PPRPPDPNPD) are compositionally biased toward pro residues. Residues 320–334 (ASPADPGSPAAAAQA) show a composition bias toward low complexity.

Interacts with KCNMA1. Isoform 1 is expressed highly in normal prostate and salivary gland, very weakly in colon, pancreas, and intestine, and not at all in other tissues. Isoform 1 is expressed highly in many cancer cell lines and in breast cancer, pancreatic cancer and colon cancer. Isoform 2 is expressed in cancer cell lines.

Its subcellular location is the cell membrane. It is found in the cytoplasm. The protein localises to the cytoskeleton. Functionally, auxiliary protein of the large-conductance, voltage and calcium-activated potassium channel (BK alpha). Required for the conversion of BK alpha channels from a high-voltage to a low-voltage activated channel type in non-excitable cells. These are characterized by negative membrane voltages and constant low levels of calcium. The sequence is that of Leucine-rich repeat-containing protein 26 (LRRC26) from Homo sapiens (Human).